We begin with the raw amino-acid sequence, 856 residues long: Rab effector MyRIP (856 aa).

The region spanning 4 to 124 (KLDLSGLTDD…TQSLEWFYNN (121 aa)) is the RabBD domain. An FYVE-type zinc finger spans residues 63–105 (CCMRCCSPFTFLVNARRRCGECKFSVCKSCCSYQKHEKLWVCC). The myosin-binding stretch occupies residues 143–560 (RKHRLESGAC…AQVSDNVSET (418 aa)). Residues 193 to 209 (VALRVAEEAIEEAISKA) are PRKAR2A-binding. The segment at 232 to 248 (LTEELAGTILQRIIRKQ) is negative regulation of PRKAR2A-binding. A disordered region spans residues 252–294 (AELRAEEEEPEWPRSQSGSVKARGEGTTAPPGRHKARATFRRS). Residues S299 and S351 each carry the phosphoserine modification. Disordered regions lie at residues 351 to 578 (SPDG…SVEE), 592 to 625 (SEKETSSGEDQESESKAEPKNQKGSLSSEENNQG), 778 to 806 (RRDQKQRSQVQTIDTSRQQRRKLPAPPVK), and 826 to 856 (LLQGSSTNRPTASTGDTKDLMEPDLESAVMY). Residues 395–405 (IGSDSEEDFDY) are compositionally biased toward acidic residues. 2 stretches are compositionally biased toward low complexity: residues 427-437 (PTQAQSSGQGP) and 450-460 (SDSETSSTSSS). The tract at residues 495–856 (FNPQAAGGET…EPDLESAVMY (362 aa)) is actin-binding. 4 stretches are compositionally biased toward polar residues: residues 551–574 (AQVSDNVSETDISNETQNSRSSTD), 613–625 (QKGSLSSEENNQG), 784–793 (RSQVQTIDTS), and 826–840 (LLQGSSTNRPTASTG).

Binds RAB27A that has been activated by GTP-binding via its N-terminus. Binds MYO5A, MYO7A and F-actin. Interacts with PRKAR2A. Interacts with components of the exocyst complex, including EXOC3 and EXOC4. As to expression, detected in brain, skin, heart, lung, adrenal medulla, pancreas, intestine, liver, kidney, skeletal muscle and testis. Detected in cochlear and vestibular hair cells in the inner ear, and in photoreceptor and pigment epithelium cells in the retina.

The protein resides in the cytoplasm. The protein localises to the perinuclear region. Its subcellular location is the cytoplasmic vesicle. It localises to the secretory vesicle. It is found in the melanosome. Rab effector protein involved in melanosome transport. Serves as link between melanosome-bound RAB27A and the motor proteins MYO5A and MYO7A. May link RAB27A-containing vesicles to actin filaments. Functions as a protein kinase A-anchoring protein (AKAP). May act as a scaffolding protein that links PKA to components of the exocytosis machinery, thus facilitating exocytosis, including insulin release. This is Rab effector MyRIP (Myrip) from Mus musculus (Mouse).